We begin with the raw amino-acid sequence, 147 residues long: Large ribosomal subunit protein bL9 (147 aa).

It belongs to the bacterial ribosomal protein bL9 family.

In terms of biological role, binds to the 23S rRNA. This Sulfurovum sp. (strain NBC37-1) protein is Large ribosomal subunit protein bL9.